The chain runs to 154 residues: Actin-related protein 2/3 complex subunit 5 (154 aa).

At Thr-142 the chain carries Phosphothreonine.

The protein belongs to the ARPC5 family. In terms of assembly, component of the Arp2/3 complex composed of ARP2, ARP3, ARC40/p41-ARC, ARC35/p34-ARC, ARC18/p21-ARC, ARC19/p20-ARC and ARC16/p16-ARC.

Its subcellular location is the cytoplasm. It is found in the cytoskeleton. The protein localises to the actin patch. Functions as a component of the Arp2/3 complex which is involved in regulation of actin polymerization and together with an activating nucleation-promoting factor (NPF) mediates the formation of branched actin networks. The protein is Actin-related protein 2/3 complex subunit 5 (ARC15) of Saccharomyces cerevisiae (strain ATCC 204508 / S288c) (Baker's yeast).